A 576-amino-acid polypeptide reads, in one-letter code: Arginine--tRNA ligase (576 aa).

Positions Ala-132–His-142 match the 'HIGH' region motif.

This sequence belongs to the class-I aminoacyl-tRNA synthetase family. As to quaternary structure, monomer.

The protein resides in the cytoplasm. The catalysed reaction is tRNA(Arg) + L-arginine + ATP = L-arginyl-tRNA(Arg) + AMP + diphosphate. This is Arginine--tRNA ligase from Ehrlichia ruminantium (strain Gardel).